A 459-amino-acid polypeptide reads, in one-letter code: Cyclin-dependent kinase F-4 (459 aa).

The region spanning 4–283 (FKMIKEVGDG…AAEVLQHTFF (280 aa)) is the Protein kinase domain. ATP contacts are provided by residues 10 to 18 (VGDGTFGSV) and lysine 33. Aspartate 125 serves as the catalytic Proton acceptor. Phosphoserine is present on serine 151. Threonine 156 is modified (phosphothreonine). The tract at residues 310-397 (KGVSEHGMPR…RHSRSLPETG (88 aa)) is disordered. 2 stretches are compositionally biased toward polar residues: residues 322 to 346 (STGT…SKTG) and 366 to 375 (ESNNKLTTNR).

It belongs to the protein kinase superfamily. CMGC Ser/Thr protein kinase family. CDC2/CDKX subfamily.

It carries out the reaction L-seryl-[protein] + ATP = O-phospho-L-seryl-[protein] + ADP + H(+). The catalysed reaction is L-threonyl-[protein] + ATP = O-phospho-L-threonyl-[protein] + ADP + H(+). It catalyses the reaction [DNA-directed RNA polymerase] + ATP = phospho-[DNA-directed RNA polymerase] + ADP + H(+). This chain is Cyclin-dependent kinase F-4 (CDKF-4), found in Oryza sativa subsp. japonica (Rice).